Here is a 359-residue protein sequence, read N- to C-terminus: Peptide chain release factor 1 (359 aa).

Gln236 is modified (N5-methylglutamine).

This sequence belongs to the prokaryotic/mitochondrial release factor family. Methylated by PrmC. Methylation increases the termination efficiency of RF1.

Its subcellular location is the cytoplasm. Functionally, peptide chain release factor 1 directs the termination of translation in response to the peptide chain termination codons UAG and UAA. The sequence is that of Peptide chain release factor 1 from Streptococcus agalactiae serotype V (strain ATCC BAA-611 / 2603 V/R).